Consider the following 102-residue polypeptide: Small ribosomal subunit protein uS10 (102 aa).

This sequence belongs to the universal ribosomal protein uS10 family. In terms of assembly, part of the 30S ribosomal subunit.

In terms of biological role, involved in the binding of tRNA to the ribosomes. The polypeptide is Small ribosomal subunit protein uS10 (Acidiphilium cryptum (strain JF-5)).